Here is a 130-residue protein sequence, read N- to C-terminus: MIKLRLKRFGKKREASFRLVACNSTSRRDGRPLQELGFYNPRTKETRLDTEAIRERLGQGAQPTDIVRTLLERGGLIEKTVRPSVTVGQAKQTAKREAAAKQAAKDAAEAKAAAAAEAEAPAADAEASEG.

Basic and acidic residues predominate over residues Ala-98 to Glu-109. A disordered region spans residues Ala-98–Gly-130. A compositionally biased stretch (low complexity) spans Ala-110–Gly-130.

It belongs to the bacterial ribosomal protein bS16 family.

This Synechococcus sp. (strain CC9902) protein is Small ribosomal subunit protein bS16.